A 354-amino-acid chain; its full sequence is Uroporphyrinogen decarboxylase (354 aa).

Substrate contacts are provided by residues 27 to 31 (RQAGR), Asp77, Tyr154, Thr209, and His327.

This sequence belongs to the uroporphyrinogen decarboxylase family. Homodimer.

The protein resides in the cytoplasm. The enzyme catalyses uroporphyrinogen III + 4 H(+) = coproporphyrinogen III + 4 CO2. It functions in the pathway porphyrin-containing compound metabolism; protoporphyrin-IX biosynthesis; coproporphyrinogen-III from 5-aminolevulinate: step 4/4. In terms of biological role, catalyzes the decarboxylation of four acetate groups of uroporphyrinogen-III to yield coproporphyrinogen-III. The sequence is that of Uroporphyrinogen decarboxylase from Salmonella heidelberg (strain SL476).